Here is a 1268-residue protein sequence, read N- to C-terminus: Truncated polyprotein 1aTF (1268 aa).

Residues 8–28 (CMCTPAARVFWNAGQVFCTRC) form a C4-type; atypical zinc finger. Positions 69-180 (ECTPSGCCWL…QPFCPFEEAH (112 aa)) constitute a Peptidase C31 domain. Residues 69–182 (ECTPSGCCWL…FCPFEEAHSD (114 aa)) form a PCP1-alpha region. Residues Cys76 and His146 each act as for Nsp1-alpha papain-like cysteine proteinase activity in the active site. The segment at 269 to 384 (PNVFDGKCWL…IFRFGAHKWY (116 aa)) is PCP1-beta. Positions 269–385 (PNVFDGKCWL…FRFGAHKWYG (117 aa)) constitute a Peptidase C32 domain. Catalysis depends on for Nsp1-beta papain-like cysteine proteinase activity residues Cys276 and His345. Positions 420 to 527 (TYSPPTDGSC…VGVCSEGCVA (108 aa)) constitute a Peptidase C33 domain. Active-site for Nsp2 cysteine proteinase activity residues include Cys429 and His498. Disordered stretches follow at residues 728 to 758 (AIGSAQSSSDSKRENMHNSREDEPLDLSHPA) and 1027 to 1064 (SVTPPPKSAGLVLDQTVPPPTDIQQEDATPSDGLSHAS). Positions 737–749 (DSKRENMHNSRED) are enriched in basic and acidic residues. 4 helical membrane-spanning segments follow: residues 1119–1139 (LWLQAIGCLQVLFYLLSCSVV), 1153–1173 (FLVLCGVFVWVFLVLGWLLLY), 1194–1214 (VMLSFWLLSSANFGNLCAALW), and 1233–1253 (VISGMLSYVYACLQIWPFLLF).

The protein localises to the host nucleus. It localises to the host cytoplasm. Its subcellular location is the host endoplasmic reticulum membrane. It is found in the membrane. Is essential for viral subgenomic mRNA synthesis. Functionally, inhibits IFN-beta production. Counteracts the action of NF-kappaB by decreasing the phosphorylation of IkappaB-alpha, such that the degradation of IkappaB-alpha is suppressed. This leads to the blockage of NF-kappaB nuclear translocation and thus interference of NF-kappaB activation. Also seems to inhibit IRF3-dependent pathways. Its function is as follows. Nsp1-beta transactivates the programmed ribosomal frameshifting event leading to the expression of the 1aTF polyprotein. The sequence is that of Truncated polyprotein 1aTF from Porcine reproductive and respiratory syndrome virus (isolate Pig/United States/SD 01-08/2001) (PRRSV).